Consider the following 595-residue polypeptide: Arginine--tRNA ligase (595 aa).

Residues 132-142 carry the 'HIGH' region motif; it reads ANPTGPLHVGH.

The protein belongs to the class-I aminoacyl-tRNA synthetase family. In terms of assembly, monomer.

It localises to the cytoplasm. The catalysed reaction is tRNA(Arg) + L-arginine + ATP = L-arginyl-tRNA(Arg) + AMP + diphosphate. In Cupriavidus taiwanensis (strain DSM 17343 / BCRC 17206 / CCUG 44338 / CIP 107171 / LMG 19424 / R1) (Ralstonia taiwanensis (strain LMG 19424)), this protein is Arginine--tRNA ligase.